A 95-amino-acid polypeptide reads, in one-letter code: U8-barytoxin-Tl1a (95 aa).

The N-terminal stretch at 1–21 is a signal peptide; that stretch reads MKTLVLVAVLGLASLYLLSYA. Residues 22 to 50 constitute a propeptide that is removed on maturation; sequence SEVQQLSVAEEEFGALIDAFGGLLETEER. Cystine bridges form between Cys-57/Cys-71, Cys-64/Cys-76, and Cys-70/Cys-86.

It belongs to the neurotoxin 10 (Hwtx-1) family. 26 (ICK-1) subfamily. In terms of tissue distribution, expressed by the venom gland.

The protein resides in the secreted. Functionally, ion channel inhibitor. The protein is U8-barytoxin-Tl1a of Trittame loki (Brush-footed trapdoor spider).